Here is a 443-residue protein sequence, read N- to C-terminus: Protein Z-dependent protease inhibitor (443 aa).

Positions 1–23 are cleaved as a signal peptide; it reads MKVVPSLLLSVLLAQVWLVPGLA. The disordered stretch occupies residues 24–66; that stretch reads PSPQSPETPAPQNQTSRVVQAPREEEEDEQEASEEKAGDEEKA. N-linked (GlcNAc...) asparagine glycosylation is present at Asn36. Ser56 is subject to Phosphoserine. The span at 56 to 66 shows a compositional bias: basic and acidic residues; that stretch reads SEEKAGDEEKA. The interval 136-153 is heparin-binding; that stretch reads TKPGLLPSLFKGLRETLS. Residues Asn180 and Asn295 are each glycosylated (N-linked (GlcNAc...) asparagine).

It belongs to the serpin family. In terms of processing, phosphorylated by FAM20C in the extracellular medium.

The protein localises to the secreted. Inhibits activity of the coagulation protease factor Xa in the presence of PROZ, calcium and phospholipids. Also inhibits factor XIa in the absence of cofactors. This chain is Protein Z-dependent protease inhibitor (SERPINA10), found in Pongo abelii (Sumatran orangutan).